The chain runs to 226 residues: PKHD-type hydroxylase PputW619_4316 (226 aa).

The Fe2OG dioxygenase domain maps to 78–178; it reads KVFPPLINCY…RYAAFFWTQS (101 aa). Fe cation contacts are provided by His96, Asp98, and His159. Arg169 provides a ligand contact to 2-oxoglutarate.

Fe(2+) is required as a cofactor. Requires L-ascorbate as cofactor.

The sequence is that of PKHD-type hydroxylase PputW619_4316 from Pseudomonas putida (strain W619).